Here is an 848-residue protein sequence, read N- to C-terminus: Neuroligin-3 (848 aa).

The first 37 residues, 1–37 (MWLQLGLPSLSLSPTPTVGRSLCLILWFLSLVLRAST), serve as a signal peptide directing secretion. Residues 38–709 (QAPAPTVNTH…NPRDYSTELS (672 aa)) are Extracellular-facing. The N-linked (GlcNAc...) asparagine glycan is linked to N98. C106 and C141 are disulfide-bonded. Residues 169 to 195 (CRKGGSGAKKQGEDLADNDGDEDEDIR) are disordered. The span at 182-194 (DLADNDGDEDEDI) shows a compositional bias: acidic residues. 2 cysteine pairs are disulfide-bonded: C340-C351 and C510-C544. Residue N545 is glycosylated (N-linked (GlcNAc...) asparagine). Polar residues-rich tracts occupy residues 645–656 (TKVPPPDTTHSS) and 677–689 (AYSN…SWNG). Residues 645-691 (TKVPPPDTTHSSHITRRPNGKTWSTKRPAISPAYSNENAPGSWNGDQ) form a disordered region. A helical membrane pass occupies residues 710–730 (VTIAVGASLLFLNVLAFAALY). Topologically, residues 731-848 (YRKDKRRQEP…LPNSHSTTRV (118 aa)) are cytoplasmic. Position 745 is a phosphoserine (S745). Position 792 is a phosphotyrosine (Y792).

This sequence belongs to the type-B carboxylesterase/lipase family. As to quaternary structure, homodimer, and heterodimer with NLGN1 and NLGN2. Interacts with neurexins NRXN1, NRXN2 and NRXN3. Interaction with neurexins is mediated by heparan sulfate glycan modification on neurexin. Interacts (via its C-terminus) with DLG4/PSD-95 (via PDZ domain 3). In terms of processing, the N-terminus is blocked. Detected in brain and on hippocampus neurons, especially at excitatory synapses. Detected in retina (at protein level). Expressed in brain, spinal cord and dorsal root ganglion.

It localises to the cell membrane. Its subcellular location is the synapse. Its function is as follows. Cell surface protein involved in cell-cell-interactions via its interactions with neurexin family members. Plays a role in synapse function and synaptic signal transmission, and probably mediates its effects by recruiting and clustering other synaptic proteins. May promote the initial formation of synapses, but is not essential for this. May also play a role in glia-glia or glia-neuron interactions in the developing peripheral nervous system. This is Neuroligin-3 (Nlgn3) from Rattus norvegicus (Rat).